We begin with the raw amino-acid sequence, 987 residues long: Vacuolar membrane protease (987 aa).

Over 1 to 14 the chain is Cytoplasmic; sequence MATRKARNPLAFMP. The chain crosses the membrane as a helical span at residues 15 to 35; it reads WPVTILTTAMYLALIIPLLVI. Residues 36-384 lie on the Vacuolar side of the membrane; the sequence is HHNVPPAPRT…AFAVFRLHTL (349 aa). N-linked (GlcNAc...) asparagine glycans are attached at residues asparagine 51 and asparagine 117. The Zn(2+) site is built by histidine 167 and aspartate 179. Residue glutamate 213 is the Proton acceptor of the active site. Zn(2+) is bound by residues glutamate 214, glutamate 239, and histidine 312. The helical transmembrane segment at 385 to 405 threads the bilayer; that stretch reads FALSVTLLIVAPLTLLVTSVI. Over 406-435 the chain is Cytoplasmic; sequence LSRADKMYLFRSSVYSEINDDYIPLRGLRG. A helical transmembrane segment spans residues 436–456; the sequence is FFRFPFLISIPTGVTVGLAYM. Topologically, residues 457–466 are vacuolar; it reads VTKVNPFIAH. A helical transmembrane segment spans residues 467–487; the sequence is SSSYAVWSMMISAWIFLAWFV. Topologically, residues 488–501 are cytoplasmic; it reads SRVANSARPSAFHR. The helical transmembrane segment at 502-522 threads the bilayer; that stretch reads VYTWTWMFVLTWSLMVVCTVY. The Vacuolar segment spans residues 523-526; it reads EHEE. The chain crosses the membrane as a helical span at residues 527–547; the sequence is GLAGGYFIFFYFAGTFLATWI. The Cytoplasmic portion of the chain corresponds to 548–649; the sequence is SYLELFALPT…WSGVLPRWTW (102 aa). The segment at 572–600 is disordered; sequence STQGSRLAASGDEHQDDAAEEDPTESTSL. A helical transmembrane segment spans residues 650–670; the sequence is LLQLLITAPVILMLIVPLALL. The Vacuolar segment spans residues 671–686; that stretch reads TTSALSQTGQDGSPQL. Residues 687–707 traverse the membrane as a helical segment; that stretch reads LIYLFISCLTALLFAPMLPFI. Residues 708-715 are Cytoplasmic-facing; the sequence is HRYTYHLP. The helical transmembrane segment at 716-736 threads the bilayer; it reads IFLLFVFIGTMIYNLVAFPFA. Residues 737–987 lie on the Vacuolar side of the membrane; it reads DSNRLKLFFL…KRSSLGALGS (251 aa). Asparagine 781 and asparagine 871 each carry an N-linked (GlcNAc...) asparagine glycan.

The protein belongs to the peptidase M28 family. It depends on Zn(2+) as a cofactor.

The protein localises to the vacuole membrane. In terms of biological role, may be involved in vacuolar sorting and osmoregulation. The chain is Vacuolar membrane protease from Penicillium rubens (strain ATCC 28089 / DSM 1075 / NRRL 1951 / Wisconsin 54-1255) (Penicillium chrysogenum).